Reading from the N-terminus, the 326-residue chain is Aquaporin-4 (326 aa).

At Met1–Lys39 the chain is on the cytoplasmic side. S-palmitoyl cysteine attachment occurs at residues Cys15 and Cys20. A helical membrane pass occupies residues Ala40–Ile60. Residues Asn61–Asp72 lie on the Extracellular side of the membrane. The helical transmembrane segment at Met73–Gly92 threads the bilayer. Topologically, residues His93–Gly96 are cytoplasmic. The segment at residues Gly97–Thr104 is an intramembrane region (discontinuously helical). Positions Asn100–Ala102 match the NPA 1 motif. Over Val105–Ser118 the chain is Cytoplasmic. Residue Ser114 is modified to Phosphoserine; by PKG. Residues Val119–Val139 traverse the membrane as a helical segment. The Extracellular segment spans residues Thr140–Thr158. Asn156 carries N-linked (GlcNAc...) asparagine glycosylation. Residues Ala159–Ala179 traverse the membrane as a helical segment. Residues Ser180 to Asp187 lie on the Cytoplasmic side of the membrane. Ser183 carries the post-translational modification Phosphoserine; by PKC. A helical transmembrane segment spans residues Val188 to Ile208. N-linked (GlcNAc...) asparagine glycosylation occurs at Asn209. Topologically, residues Asn209 to Thr211 are extracellular. Residues Gly212–Val225 constitute an intramembrane region (discontinuously helical). Positions Asn216–Ala218 match the NPA 2 motif. Residues Ile226–Trp234 lie on the Extracellular side of the membrane. The helical transmembrane segment at Ile235–Phe255 threads the bilayer. Residues Cys256–Val326 are Cytoplasmic-facing. Ser279 and Ser288 each carry phosphoserine. Thr292 carries the post-translational modification Phosphothreonine. At Ser324 the chain carries Phosphoserine.

It belongs to the MIP/aquaporin (TC 1.A.8) family. Homotetramer. The tetramers can form oligomeric arrays in membranes. The size of the oligomers differs between tissues and is smaller in skeletal muscle than in brain. Interaction between AQP4 oligomeric arrays in close-by cells can contribute to cell-cell adhesion. Part of a complex containing MLC1, TRPV4, HEPACAM and ATP1B1. Post-translationally, phosphorylation by PKC at Ser-183 reduces conductance by 50%. Phosphorylation by PKG at Ser-114 in response to glutamate increases conductance by 40%. Isoform Long: Palmitoylated on its N-terminal region.

It is found in the cell membrane. Its subcellular location is the basolateral cell membrane. The protein resides in the endosome membrane. It localises to the sarcolemma. The protein localises to the cell projection. It catalyses the reaction H2O(in) = H2O(out). Its function is as follows. Forms a water-specific channel. Plays an important role in brain water homeostasis and in glymphatic solute transport. Required for a normal rate of water exchange across the blood brain interface. Required for normal levels of cerebrospinal fluid influx into the brain cortex and parenchyma along paravascular spaces that surround penetrating arteries, and for normal drainage of interstitial fluid along paravenous drainage pathways. Thereby, it is required for normal clearance of solutes from the brain interstitial fluid, including soluble beta-amyloid peptides derived from APP. Plays a redundant role in urinary water homeostasis and urinary concentrating ability. The sequence is that of Aquaporin-4 (AQP4) from Notomys alexis (Spinifex hopping mouse).